Reading from the N-terminus, the 566-residue chain is Protein kintoun (566 aa).

Disordered regions lie at residues 183-298, 399-467, and 493-552; these read KYKG…TAPQ, EEEE…AETG, and QLEE…ESRI. Residues 208 to 290 are compositionally biased toward low complexity; the sequence is PQQTTGPQQP…HQPTDPQQTT (83 aa). A compositionally biased stretch (basic and acidic residues) spans 399–424; it reads EEEERRAEEEESRKGGDEDGELHPDC. Positions 440–467 are enriched in low complexity; the sequence is TPAADTHTPAADTHTPAADTHTPAAETG. Residues 535–550 show a composition bias toward basic and acidic residues; that stretch reads DPAHTDPAHTDPEMES.

It belongs to the PIH1 family. Kintoun subfamily.

It localises to the cytoplasm. It is found in the dynein axonemal particle. Functionally, required for cytoplasmic pre-assembly of axonemal dyneins, thereby playing a central role in motility in cilia and flagella. Involved in pre-assembly of dynein arm complexes in the cytoplasm before intraflagellar transport loads them for the ciliary compartment. The sequence is that of Protein kintoun from Danio rerio (Zebrafish).